An 82-amino-acid chain; its full sequence is MIGKYLSWFMLAFLFGFVLESYRVQSQDLNPTEKEVLSNMLDFLQRHSRTTYMFPLLSESKRNSELINSLLGAPRVLNNAGR.

The first 26 residues, 1 to 26 (MIGKYLSWFMLAFLFGFVLESYRVQS), serve as a signal peptide directing secretion. Residue alanine 80 is modified to Alanine amide.

It belongs to the arthropod PDH family. Expressed strongly in the head and weakly in the ventral nerve cord. Not detected in the midgut cecum or hindgut. In the cephalic neural complex, specifically localized to cells within the optic lobe, anteromedian protocerebrum, accessory lobe, tritocerebrum, and subesophageal ganglion.

The protein localises to the secreted. Functionally, the pigment-dispersing hormone causes the migration of the distal retinal pigment into the proximal end of the pigment chromatophore cells and thus decreases the amount of light entering the retinulas. May also function as a neurotransmitter and/or neuromodulator. The sequence is that of Pigment-dispersing hormone peptides from Armadillidium vulgare (Pillbug).